The following is a 294-amino-acid chain: MIEVLTTDSQKLLHQLNTLLEQESRCQPKVCGLKLIESAHDNGLRMTARLRDFEVKDLLSLTQFFGFDTETFSLAVNLLDRFLSKMKVQAKHLGCVGLSCFYLAVKSIEEERNVPLATDLIRISQYRFTVSDLMRMEKIVLEKVCWKVKATTAFQFLQLYYSLIRETLPFERRNDLNFERLEAQLKACHCRIIFSKAKPSVLALAIIALEIQALKYVELTEGVECIQKHSKISGRDLTFWQELVSKCLTEYSSNKCSKPNGQKLKWIVSGRTARQLKHSYYRITHLPTIPETMG.

It belongs to the cyclin family. Cyclin G subfamily.

It localises to the nucleus. May play a role in growth regulation. Is associated with G2/M phase arrest in response to DNA damage. May be an intermediate by which p53 mediates its role as an inhibitor of cellular proliferation. In Rattus norvegicus (Rat), this protein is Cyclin-G1 (Ccng1).